Here is a 418-residue protein sequence, read N- to C-terminus: Inner capsid protein sigma-2 (418 aa).

This sequence belongs to the orthoreovirus sigma-1 protein family. As to quaternary structure, interacts with protein mu-NS; in viral inclusions.

The protein resides in the virion. Its function is as follows. Inner capsid (core) component. This Reovirus type 3 (strain Dearing) (T3D) protein is Inner capsid protein sigma-2 (S2).